The following is a 327-amino-acid chain: Quinone oxidoreductase (327 aa).

It belongs to the zinc-containing alcohol dehydrogenase family. Quinone oxidoreductase subfamily. Homodimer.

It carries out the reaction 2 a quinone + NADPH + H(+) = 2 a 1,4-benzosemiquinone + NADP(+). This chain is Quinone oxidoreductase (qor), found in Salmonella typhimurium (strain LT2 / SGSC1412 / ATCC 700720).